Here is a 194-residue protein sequence, read N- to C-terminus: dCTP deaminase (194 aa).

Residues 110-115 (RSSLAR), Asp128, 136-138 (VLE), Tyr171, Lys178, and Gln182 contribute to the dCTP site. Residue Glu138 is the Proton donor/acceptor of the active site. Residues 169–194 (RPYNKRDNAKYKDQTSAVGSRISGEN) are disordered. Residues 170-181 (PYNKRDNAKYKD) are compositionally biased toward basic and acidic residues. Polar residues predominate over residues 182 to 194 (QTSAVGSRISGEN).

The protein belongs to the dCTP deaminase family. Homotrimer.

It carries out the reaction dCTP + H2O + H(+) = dUTP + NH4(+). Its pathway is pyrimidine metabolism; dUMP biosynthesis; dUMP from dCTP (dUTP route): step 1/2. Catalyzes the deamination of dCTP to dUTP. The sequence is that of dCTP deaminase from Marinomonas sp. (strain MWYL1).